We begin with the raw amino-acid sequence, 446 residues long: Exodeoxyribonuclease 7 large subunit (446 aa).

It belongs to the XseA family. Heterooligomer composed of large and small subunits.

Its subcellular location is the cytoplasm. The catalysed reaction is Exonucleolytic cleavage in either 5'- to 3'- or 3'- to 5'-direction to yield nucleoside 5'-phosphates.. In terms of biological role, bidirectionally degrades single-stranded DNA into large acid-insoluble oligonucleotides, which are then degraded further into small acid-soluble oligonucleotides. In Streptococcus gordonii (strain Challis / ATCC 35105 / BCRC 15272 / CH1 / DL1 / V288), this protein is Exodeoxyribonuclease 7 large subunit.